Reading from the N-terminus, the 371-residue chain is Protein IQ-DOMAIN 7 (371 aa).

The interval 1–32 is disordered; it reads MGGSGNWIRSLISNRKPVNDQQEKLSDKSSKK. Positions 17–29 are enriched in basic and acidic residues; sequence PVNDQQEKLSDKS. IQ domains follow at residues 93 to 121 and 122 to 144; these read REWASTRIQAAFRAFLARQAFRALKAVVR and IQAIFRGRQVRKQAAVTLRCMQA. The tract at residues 125–141 is calmodulin-binding; sequence IFRGRQVRKQAAVTLRC. 2 disordered regions span residues 285–308 and 327–371; these read SGMSYDSLHDETSTSSTSQSPVAF and LTQS…SQRS. 2 stretches are compositionally biased toward polar residues: residues 297–308 and 327–341; these read STSSTSQSPVAF and LTQSTQAKQRQSGLS.

It belongs to the IQD family. Binds to multiple calmodulin (CaM) in the presence of Ca(2+) and CaM-like proteins.

Its subcellular location is the nucleus. It is found in the nucleus envelope. The protein resides in the cytoplasm. The protein localises to the cytoskeleton. Its function is as follows. May be involved in cooperative interactions with calmodulins or calmodulin-like proteins. Recruits calmodulin proteins to microtubules, thus being a potential scaffold in cellular signaling and trafficking. May associate with nucleic acids and regulate gene expression at the transcriptional or post-transcriptional level. The polypeptide is Protein IQ-DOMAIN 7 (Arabidopsis thaliana (Mouse-ear cress)).